Here is a 359-residue protein sequence, read N- to C-terminus: Probable tyrosine-protein phosphatase pir-2 (359 aa).

Residues 16 to 191 (QPVGNVIPRT…AKDKRDKQVD (176 aa)) form the Tyrosine-protein phosphatase domain. Residue Cys131 is the Phosphocysteine intermediate of the active site. A compositionally biased stretch (basic and acidic residues) spans 184 to 199 (DKRDKQVDSDSDSSER). Disordered stretches follow at residues 184–211 (DKRD…KHRE), 234–259 (SVSG…PHHW), and 274–328 (PVAN…RNRM). The segment covering 200–210 (QRKKKNKRKHR) has biased composition (basic residues). The segment covering 234 to 246 (SVSGTDYQNSPNG) has biased composition (polar residues). The segment covering 290 to 309 (PQEEEEFEEDFEEIEEETET) has biased composition (acidic residues). The segment covering 319 to 328 (SKRRARRNRM) has biased composition (basic residues).

The protein belongs to the protein-tyrosine phosphatase family. Non-receptor class CDC14 subfamily.

The enzyme catalyses O-phospho-L-tyrosyl-[protein] + H2O = L-tyrosyl-[protein] + phosphate. This Caenorhabditis elegans protein is Probable tyrosine-protein phosphatase pir-2.